The sequence spans 249 residues: Homeobox protein TGIF2LX (249 aa).

Disordered regions lie at residues 1–65 (MEAA…GYSP) and 126–199 (DPIV…PKKK). Residues 9–27 (AETRSRVEKDSRRAIKDSP) show a composition bias toward basic and acidic residues. The segment covering 28 to 46 (AKTQSPAQDTSIMLRNNAD) has biased composition (polar residues). The homeobox; TALE-type DNA-binding region spans 55 to 118 (EHKKKRKGYS…INARRRILPD (64 aa)). Residues 159–172 (DNVQSLPLRSSPKG) are compositionally biased toward polar residues.

The protein belongs to the TALE/TGIF homeobox family.

The protein resides in the nucleus. May have a transcription role in testis. The protein is Homeobox protein TGIF2LX (TGIF2LX) of Macaca mulatta (Rhesus macaque).